The sequence spans 284 residues: MEMO1 family protein LS215_2219 (284 aa).

Belongs to the MEMO1 family.

In Saccharolobus islandicus (strain L.S.2.15 / Lassen #1) (Sulfolobus islandicus), this protein is MEMO1 family protein LS215_2219.